Reading from the N-terminus, the 359-residue chain is tRNA N6-adenosine threonylcarbamoyltransferase (359 aa).

Fe cation-binding residues include His115 and His119. Substrate-binding positions include 137–141, Asp170, Gly183, and Asn283; that span reads LVSGG. Fe cation is bound at residue Asp311. The segment at 328–359 is disordered; it reads APDSLDIAPRSRWPLDEKSAPVFGTGRRGAKA.

It belongs to the KAE1 / TsaD family. Requires Fe(2+) as cofactor.

It localises to the cytoplasm. It catalyses the reaction L-threonylcarbamoyladenylate + adenosine(37) in tRNA = N(6)-L-threonylcarbamoyladenosine(37) in tRNA + AMP + H(+). Functionally, required for the formation of a threonylcarbamoyl group on adenosine at position 37 (t(6)A37) in tRNAs that read codons beginning with adenine. Is involved in the transfer of the threonylcarbamoyl moiety of threonylcarbamoyl-AMP (TC-AMP) to the N6 group of A37, together with TsaE and TsaB. TsaD likely plays a direct catalytic role in this reaction. The chain is tRNA N6-adenosine threonylcarbamoyltransferase from Brucella suis (strain ATCC 23445 / NCTC 10510).